The primary structure comprises 235 residues: Sugar fermentation stimulation protein homolog (235 aa).

The protein belongs to the SfsA family.

In Pseudomonas aeruginosa (strain ATCC 15692 / DSM 22644 / CIP 104116 / JCM 14847 / LMG 12228 / 1C / PRS 101 / PAO1), this protein is Sugar fermentation stimulation protein homolog.